Here is a 190-residue protein sequence, read N- to C-terminus: Elongation factor P (190 aa).

K34 carries the N6-(3,6-diaminohexanoyl)-5-hydroxylysine modification.

The protein belongs to the elongation factor P family. May be beta-lysylated on the epsilon-amino group of Lys-34 by the combined action of EpmA and EpmB, and then hydroxylated on the C5 position of the same residue by EpmC (if this protein is present). Lysylation is critical for the stimulatory effect of EF-P on peptide-bond formation. The lysylation moiety may extend toward the peptidyltransferase center and stabilize the terminal 3-CCA end of the tRNA. Hydroxylation of the C5 position on Lys-34 may allow additional potential stabilizing hydrogen-bond interactions with the P-tRNA.

It is found in the cytoplasm. It functions in the pathway protein biosynthesis; polypeptide chain elongation. In terms of biological role, involved in peptide bond synthesis. Alleviates ribosome stalling that occurs when 3 or more consecutive Pro residues or the sequence PPG is present in a protein, possibly by augmenting the peptidyl transferase activity of the ribosome. Modification of Lys-34 is required for alleviation. This Psychrobacter arcticus (strain DSM 17307 / VKM B-2377 / 273-4) protein is Elongation factor P.